Reading from the N-terminus, the 638-residue chain is tRNA uridine 5-carboxymethylaminomethyl modification enzyme MnmG (638 aa).

Residues 15–20, isoleucine 127, and serine 182 each bind FAD; that span reads GAGHAG. 276–290 provides a ligand contact to NAD(+); that stretch reads GPRYCPSIEDKIVRF. FAD is bound at residue glutamine 373.

The protein belongs to the MnmG family. As to quaternary structure, homodimer. Heterotetramer of two MnmE and two MnmG subunits. The cofactor is FAD.

It is found in the cytoplasm. NAD-binding protein involved in the addition of a carboxymethylaminomethyl (cmnm) group at the wobble position (U34) of certain tRNAs, forming tRNA-cmnm(5)s(2)U34. This Streptococcus suis (strain 98HAH33) protein is tRNA uridine 5-carboxymethylaminomethyl modification enzyme MnmG.